Consider the following 363-residue polypeptide: NAD(P)H-quinone oxidoreductase subunit 1, chloroplastic (363 aa).

6 helical membrane passes run 30 to 50, 98 to 118, 129 to 149, 248 to 268, 300 to 320, and 343 to 363; these read LVPI…IVWL, FSIG…VIPF, IGIF…LMSG, YSGI…LLSS, IIGT…FLFI, and FLLP…LLSL.

It belongs to the complex I subunit 1 family. NDH is composed of at least 16 different subunits, 5 of which are encoded in the nucleus.

The protein resides in the plastid. It is found in the chloroplast thylakoid membrane. The enzyme catalyses a plastoquinone + NADH + (n+1) H(+)(in) = a plastoquinol + NAD(+) + n H(+)(out). The catalysed reaction is a plastoquinone + NADPH + (n+1) H(+)(in) = a plastoquinol + NADP(+) + n H(+)(out). Functionally, NDH shuttles electrons from NAD(P)H:plastoquinone, via FMN and iron-sulfur (Fe-S) centers, to quinones in the photosynthetic chain and possibly in a chloroplast respiratory chain. The immediate electron acceptor for the enzyme in this species is believed to be plastoquinone. Couples the redox reaction to proton translocation, and thus conserves the redox energy in a proton gradient. The polypeptide is NAD(P)H-quinone oxidoreductase subunit 1, chloroplastic (Gossypium hirsutum (Upland cotton)).